Consider the following 2261-residue polypeptide: Phospholipid-transporting ATPase ABCA1 (2261 aa).

Cys-3 is lipidated: S-palmitoyl cysteine. The N-linked (GlcNAc...) asparagine glycan is linked to Asn-14. A helical transmembrane segment spans residues 22–42 (TCQLLLEVAWPLFIFLILISV). Cys-23 carries the S-palmitoyl cysteine lipid modification. Residues 43-639 (RLSYPPYEQH…DIFLRVMSRS (597 aa)) lie on the Extracellular side of the membrane. The segment at 69–80 (WVQGIICNANNP) is annulus domain 1. Cys-75 and Cys-309 are joined by a disulfide. 8 N-linked (GlcNAc...) asparagine glycosylation sites follow: Asn-98, Asn-151, Asn-161, Asn-196, Asn-244, Asn-292, Asn-337, and Asn-349. The annulus domain 2 stretch occupies residues 368-379 (SRIIWKALKPLL). 4 N-linked (GlcNAc...) asparagine glycosylation sites follow: Asn-400, Asn-478, Asn-489, and Asn-521. The interval 564–594 (ERTNKIKDGYWDPGPRADPFEDMRYVWGGFA) is gateway domain. 5 consecutive transmembrane segments (helical) span residues 640-660 (MPLFMTLAWIYSVAVIIKSIV), 683-703 (FSWFVSSLIPLLVSAGLLVVI), 716-736 (SVVFVFLSVFAMVTILQCFLI), 745-765 (LAAACGGIIYFTLYLPYVLCV), and 777-797 (IFASLLSPVAFGFGCEYFALF). N-linked (GlcNAc...) asparagine glycosylation is present at Asn-820. A helical transmembrane segment spans residues 827–847 (MMLFDTFLYGVMTWYIEAVFP). In terms of domain architecture, ABC transporter 1 spans 899-1131 (VSIQNLVKVY…LGTGYYLTLV (233 aa)). An ATP-binding site is contributed by 933–940 (GHNGAGKT). The helical transmembrane segment at 941 to 961 (TTMSILTGLFPPTSGTAYILG) threads the bilayer. Residue Ser-1042 is modified to Phosphoserine; by PKA. S-palmitoyl cysteine attachment occurs at residues Cys-1110 and Cys-1111. N-linked (GlcNAc...) asparagine glycosylation is found at Asn-1144 and Asn-1294. The disordered stretch occupies residues 1285-1310 (FTEDDAVDPNDSDIDPESRETDLLSG). A compositionally biased stretch (acidic residues) spans 1287-1299 (EDDAVDPNDSDID). Residue Ser-1296 is modified to Phosphoserine. The helical transmembrane segment at 1351–1371 (IVLPAVFVCIALVFSLIVPPF) threads the bilayer. Over 1372–1656 (GKYPSLELQP…ALMTTSVDVL (285 aa)) the chain is Extracellular. Asn-1453 carries N-linked (GlcNAc...) asparagine glycosylation. A disulfide bridge links Cys-1463 with Cys-1477. 3 N-linked (GlcNAc...) asparagine glycosylation sites follow: Asn-1499, Asn-1504, and Asn-1637. A run of 6 helical transmembrane segments spans residues 1657-1677 (VSICVIFAMSFVPASFVVFLI), 1703-1723 (FVWDMCNYVVPATLVIIIFIC), 1735-1755 (LPVLALLLLLYGWSITPLMYP), 1768-1788 (VVLTSVNLFIGINGSVATFVL), 1802-1822 (ILKSVFLIFPHFCLGRGLIDM), and 1852-1872 (NLFAMAVEGVVFFLITVLIQY). Positions 1912–2144 (LEIKELTKIY…FGDGYTIVVR (233 aa)) constitute an ABC transporter 2 domain. 1946–1953 (GVNGAGKS) contacts ATP. N-linked (GlcNAc...) asparagine glycosylation is present at Asn-2044. Position 2054 is a phosphoserine; by PKA (Ser-2054). Asn-2238 is a glycosylation site (N-linked (GlcNAc...) asparagine).

Belongs to the ABC transporter superfamily. ABCA family. As to quaternary structure, interacts with MEGF10. May interact with APOE1; functionally associated with APOE1 in the biogenesis of HDLs. Interacts with ABCA8; this interaction potentiates cholesterol efflux. Interacts with ABCA12 and NR1H2; this interaction is required for ABCA1 localization to the cell surface and is necessary for its normal activity and stability. Post-translationally, phosphorylation on Ser-2054 regulates phospholipid efflux. In terms of processing, palmitoylated by ZDHHC8. Palmitoylation is essential for localization to the plasma membrane. As to expression, widely expressed in adult tissues. Highest levels are found in pregnant uterus and uterus.

Its subcellular location is the cell membrane. It is found in the endosome. It catalyses the reaction ATP + H2O + phospholipidSide 1 = ADP + phosphate + phospholipidSide 2.. It carries out the reaction a 1,2-diacyl-sn-glycero-3-phosphocholine(out) + ATP + H2O = a 1,2-diacyl-sn-glycero-3-phosphocholine(in) + ADP + phosphate + H(+). The catalysed reaction is a 1,2-diacyl-sn-glycero-3-phospho-L-serine(out) + ATP + H2O = a 1,2-diacyl-sn-glycero-3-phospho-L-serine(in) + ADP + phosphate + H(+). The enzyme catalyses a sphingomyelin(in) + ATP + H2O = a sphingomyelin(out) + ADP + phosphate + H(+). It catalyses the reaction cholesterol(in) + ATP + H2O = cholesterol(out) + ADP + phosphate + H(+). Its activity is regulated as follows. ATPase activity is decreased by cholesterol and ceramide. ATPase activity is stimulated by phosphatidylcholine and to a lesser degree by phosphatidylserine and sphingomyelin. Phospholipid translocase activity is highly reduced by berylium fluoride and aluminum flouride and reduced by N-ethylmaleimide. Functionally, catalyzes the translocation of specific phospholipids from the cytoplasmic to the extracellular/lumenal leaflet of membrane coupled to the hydrolysis of ATP. Thereby, participates in phospholipid transfer to apolipoproteins to form nascent high density lipoproteins/HDLs. Transports preferentially phosphatidylcholine over phosphatidylserine. May play a similar role in the efflux of intracellular cholesterol to apolipoproteins and the formation of nascent high density lipoproteins/HDLs. Translocates phospholipids from the outer face of the plasma membrane and forces it through its gateway and annulus into an elongated hydrophobic tunnel in its extracellular domain. The chain is Phospholipid-transporting ATPase ABCA1 from Mus musculus (Mouse).